Reading from the N-terminus, the 93-residue chain is uncharacterized protein (93 aa).

3 helical membrane-spanning segments follow: residues 9 to 29 (ITVIGYIAGTLTTFASLPQLI), 40 to 60 (ISLAFVITFTTGLTLWLIYGI), and 66 to 86 (PIIVFNILSLMFWIPITYLKI).

The protein localises to the cell membrane. This is an uncharacterized protein from Methanocaldococcus jannaschii (strain ATCC 43067 / DSM 2661 / JAL-1 / JCM 10045 / NBRC 100440) (Methanococcus jannaschii).